Reading from the N-terminus, the 416-residue chain is MTDMRRLGQRAKQASLLIAPLSTQIKNRFLSTLAKALVDDTQTLLAANQKDLANAKEHGISDIMMDRLRLTSERIKAIAQGVQQVADLADPIGQVIKGYTNLDGLKILQKRVPLGVIAMIFESRPNVSVDAFSLAFKTNNAIILRGGKDALHSNKALVKLIRQSLEKSGITPDAVQLVEDPSHAVAEELMQATDYVDVLIPRGGAKLIQTVKEKAKVPVIETGVGNVHIYVDAQADLDIATKIVINAKTKRPSVCNAAEGLVIHEAVAARFIPMLEKAINQVQPVEWRADDKALPLFEQAVPAKAEDFETEFLDYIMSVKVVSSLEEAISWINQYTSHHSEAIITRDIKAAETFQDLVDAAAVYVNASTRFTDGFVFGLGAEIGISTQKMHARGPMGLEALTSTKFYINGDGHIRE.

This sequence belongs to the gamma-glutamyl phosphate reductase family.

The protein localises to the cytoplasm. The enzyme catalyses L-glutamate 5-semialdehyde + phosphate + NADP(+) = L-glutamyl 5-phosphate + NADPH + H(+). It participates in amino-acid biosynthesis; L-proline biosynthesis; L-glutamate 5-semialdehyde from L-glutamate: step 2/2. Catalyzes the NADPH-dependent reduction of L-glutamate 5-phosphate into L-glutamate 5-semialdehyde and phosphate. The product spontaneously undergoes cyclization to form 1-pyrroline-5-carboxylate. The protein is Gamma-glutamyl phosphate reductase of Streptococcus pyogenes serotype M1.